We begin with the raw amino-acid sequence, 359 residues long: MITLDLILPDTRYPIHIGHGLLEQVDLLLPHLPLPKAAIVSNATVAPLYLQRLQQALEARGVACSSVVLPDGEQHKDWQTLNLIFDALLSGNAERKTTLIALGGGVIGDMTGFAAACYQRGAPFIQIPTTLLAQVDSSVGGKTAINHPLGKNMIGAFYQPKAVIADMELLATLPDRELSAGLAEVIKYGLLGDAGFLAWLEANMAKLRARDGDALQYAVKRSCEMKAAIVAEDEKENGVRALLNLGHTFGHAIEAGMGYGAWLHGEAVAAGMVLAAAASAELGWIGRDEAERVRRLIAAAGLPVKAPSMPTEQWLNLMSHDKKVEAGTVRFVLLRELGQAVIKSGLDTALLDKILRENS.

Residues 71 to 76 (DGEQHK), 105 to 109 (GVIGD), 129 to 130 (TT), Lys142, and Lys151 each bind NAD(+). Zn(2+)-binding residues include Glu184, His247, and His264.

This sequence belongs to the sugar phosphate cyclases superfamily. Dehydroquinate synthase family. Requires NAD(+) as cofactor. The cofactor is Co(2+). It depends on Zn(2+) as a cofactor.

The protein localises to the cytoplasm. It catalyses the reaction 7-phospho-2-dehydro-3-deoxy-D-arabino-heptonate = 3-dehydroquinate + phosphate. It functions in the pathway metabolic intermediate biosynthesis; chorismate biosynthesis; chorismate from D-erythrose 4-phosphate and phosphoenolpyruvate: step 2/7. Catalyzes the conversion of 3-deoxy-D-arabino-heptulosonate 7-phosphate (DAHP) to dehydroquinate (DHQ). The chain is 3-dehydroquinate synthase from Chromobacterium violaceum (strain ATCC 12472 / DSM 30191 / JCM 1249 / CCUG 213 / NBRC 12614 / NCIMB 9131 / NCTC 9757 / MK).